We begin with the raw amino-acid sequence, 282 residues long: MSCGRPPPDVDGMITLKVDNLTYRTSPDSLRRVFEKYGRVGDVYIPREPHTKAPRGFAFVRFHDRRDAQDAEAAMDGAELDGRELRVQVARYGRRDLPRSRQGEPRGRSRGGGYGRRSRSYGRRSRSPRRRHRSRSRGPSCSRSRSRSRYRGSRYSRSPYSRSPYSRSRYSRSPYSRSRYRESRYGGSHYSSSGYSNSRYSRYHSSRSHSKSGSSTSSRSASTSKSSSARRSKSSSVSRSRSRSRSSSMTRSPPRVSKRKSKSRSRSKRPPKSPEEEGQMSS.

S2 carries the N-acetylserine modification. Phosphoserine is present on residues S2 and S26. An RRM domain is found at 14 to 92 (ITLKVDNLTY…RELRVQVARY (79 aa)). A disordered region spans residues 91–282 (RYGRRDLPRS…SPEEEGQMSS (192 aa)). A compositionally biased stretch (basic and acidic residues) spans 93-107 (GRRDLPRSRQGEPRG). Basic residues-rich tracts occupy residues 116-136 (RRSR…RSRS) and 144-154 (SRSRSRYRGSR). Low complexity-rich tracts occupy residues 155 to 177 (YSRS…PYSR) and 185 to 200 (YGGS…NSRY). S156, S158, S171, S173, and S196 each carry phosphoserine. A compositionally biased stretch (basic residues) spans 201–210 (SRYHSSRSHS). 2 stretches are compositionally biased toward low complexity: residues 211–227 (KSGS…SKSS) and 234–255 (SSSV…SPPR). Basic residues predominate over residues 256–271 (VSKRKSKSRSRSKRPP). S273 carries the phosphoserine modification.

It belongs to the splicing factor SR family. Strongly expressed in pancreas, spleen and prostate. Weakly expressed in lung, liver and thymus.

It localises to the nucleus. Functionally, involved in pre-mRNA alternative splicing. The sequence is that of Serine/arginine-rich splicing factor 8 (SRSF8) from Homo sapiens (Human).